The chain runs to 197 residues: Adenylyl-sulfate kinase (197 aa).

Gly33–Ser40 provides a ligand contact to ATP. Ser107 functions as the Phosphoserine intermediate in the catalytic mechanism.

This sequence belongs to the APS kinase family.

It carries out the reaction adenosine 5'-phosphosulfate + ATP = 3'-phosphoadenylyl sulfate + ADP + H(+). It participates in sulfur metabolism; hydrogen sulfide biosynthesis; sulfite from sulfate: step 2/3. Functionally, catalyzes the synthesis of activated sulfate. The protein is Adenylyl-sulfate kinase of Bacillus licheniformis (strain ATCC 14580 / DSM 13 / JCM 2505 / CCUG 7422 / NBRC 12200 / NCIMB 9375 / NCTC 10341 / NRRL NRS-1264 / Gibson 46).